Reading from the N-terminus, the 158-residue chain is NAD(P)H-quinone oxidoreductase subunit J, chloroplastic (158 aa).

The protein belongs to the complex I 30 kDa subunit family. As to quaternary structure, NDH is composed of at least 16 different subunits, 5 of which are encoded in the nucleus.

Its subcellular location is the plastid. It localises to the chloroplast thylakoid membrane. It catalyses the reaction a plastoquinone + NADH + (n+1) H(+)(in) = a plastoquinol + NAD(+) + n H(+)(out). It carries out the reaction a plastoquinone + NADPH + (n+1) H(+)(in) = a plastoquinol + NADP(+) + n H(+)(out). Functionally, NDH shuttles electrons from NAD(P)H:plastoquinone, via FMN and iron-sulfur (Fe-S) centers, to quinones in the photosynthetic chain and possibly in a chloroplast respiratory chain. The immediate electron acceptor for the enzyme in this species is believed to be plastoquinone. Couples the redox reaction to proton translocation, and thus conserves the redox energy in a proton gradient. This is NAD(P)H-quinone oxidoreductase subunit J, chloroplastic from Nasturtium officinale (Watercress).